The sequence spans 55 residues: ATP synthase F(0) complex subunit 8 (55 aa).

The helical transmembrane segment at Leu4–Ile24 threads the bilayer.

It belongs to the ATPase protein 8 family. As to quaternary structure, component of the ATP synthase complex composed at least of ATP5F1A/subunit alpha, ATP5F1B/subunit beta, ATP5MC1/subunit c (homooctomer), MT-ATP6/subunit a, MT-ATP8/subunit 8, ATP5ME/subunit e, ATP5MF/subunit f, ATP5MG/subunit g, ATP5MK/subunit k, ATP5MJ/subunit j, ATP5F1C/subunit gamma, ATP5F1D/subunit delta, ATP5F1E/subunit epsilon, ATP5PF/subunit F6, ATP5PB/subunit b, ATP5PD/subunit d, ATP5PO/subunit OSCP. ATP synthase complex consists of a soluble F(1) head domain (subunits alpha(3) and beta(3)) - the catalytic core - and a membrane F(0) domain - the membrane proton channel (subunits c, a, 8, e, f, g, k and j). These two domains are linked by a central stalk (subunits gamma, delta, and epsilon) rotating inside the F1 region and a stationary peripheral stalk (subunits F6, b, d, and OSCP).

The protein resides in the mitochondrion membrane. Functionally, subunit 8, of the mitochondrial membrane ATP synthase complex (F(1)F(0) ATP synthase or Complex V) that produces ATP from ADP in the presence of a proton gradient across the membrane which is generated by electron transport complexes of the respiratory chain. ATP synthase complex consist of a soluble F(1) head domain - the catalytic core - and a membrane F(1) domain - the membrane proton channel. These two domains are linked by a central stalk rotating inside the F(1) region and a stationary peripheral stalk. During catalysis, ATP synthesis in the catalytic domain of F(1) is coupled via a rotary mechanism of the central stalk subunits to proton translocation. In vivo, can only synthesize ATP although its ATP hydrolase activity can be activated artificially in vitro. Part of the complex F(0) domain. This is ATP synthase F(0) complex subunit 8 from Dicentrarchus labrax (European seabass).